Consider the following 299-residue polypeptide: Somaliensene A/B synthase (299 aa).

The next 7 membrane-spanning stretches (helical) occupy residues 32–49 (WTTLFPATCFVLAAAVHT), 56–72 (TAVAVASGVLYFWLFVY), 110–132 (IAVRVAFPLYGWFLGVLEWALLW), 153–171 (LYAGIGVVAQLAAAWEIVA), 177–194 (AWRWIVTLTITVTLLMSV), 222–241 (VFLCAGFALGPLAIHHFLMA), and 247–269 (WWIVATDVVLGGLSLLLAFRVVL).

It belongs to the UbiA prenyltransferase family. Mg(2+) is required as a cofactor.

The protein resides in the cell membrane. The enzyme catalyses (2E,6E,10E,14E)-geranylfarnesyl diphosphate = somaliensene A + diphosphate. It carries out the reaction (2E,6E,10E,14E)-geranylfarnesyl diphosphate = (-)-somaliensene B + diphosphate. It participates in secondary metabolite biosynthesis; terpenoid biosynthesis. Functionally, sesterterpene cyclase, which converts geranylfarnesyl diphosphate (GFPP) into the terpenes somaliensene A and somaliensene B. The polypeptide is Somaliensene A/B synthase (Streptomyces somaliensis (strain ATCC 33201 / DSM 40738 / JCM 12659 / KCTC 9044 / NCTC 11332 / NRRL B-12077 / IP 733)).